The chain runs to 407 residues: uncharacterized protein (407 aa).

Disordered stretches follow at residues M1–D64, G110–F276, and Q314–P341. Positions K7–F32 are enriched in polar residues. Residues T33 to K44 show a composition bias toward basic and acidic residues. The segment covering D122–S137 has biased composition (acidic residues). Polar residues-rich tracts occupy residues D138 to S147 and N184 to P201. Low complexity predominate over residues S209–S231. Over residues K232–N246 the composition is skewed to basic residues. The span at K247–T258 shows a compositional bias: basic and acidic residues. 2 stretches are compositionally biased toward basic residues: residues H259–R270 and R316–P341.

This is an uncharacterized protein from Acanthamoeba polyphaga mimivirus (APMV).